The chain runs to 544 residues: MVAKNIKYNEEARKKIQKGVKTLAEAVKVTLGPKGRHVVIDKSFGSPQVTKDGVTVAKEVELADKHENMGAQMVKEVASKTADKAGDGTTTATVLAEAIYTEGLRNVTAGANPMDLKRGIDKAVKVVVDQIRKISKPVQHHKEIAQVATISANNDAEIGNLIAEAMEKVGKNGSITVEEAKGFETVLDIVEGMNFNRGYLSSYFATNPETQECVLEDALVLIYDKKISGIKDFLPVLQQVAESGRPLLIIAEDIEGEALATLVVNRIRGGFRVCAVKAPGFGDRRKAMLEDIAILTGGQLISEELGMKLENANLAMLGKAKKVIVSKEDTTIVEGMGEKEALEARCESIKKQIEDSSSDYDKEKLQERLAKLSGGVAVIRVGAATEIEMKEKKDRVDDAQHATIAAVEEGILPGGGTALIRCIPTLEAFLPMLTNEDEQIGARIVLKALSAPLKQIAANAGKEGAIIFQQVMSRSANEGYDALRDAYTDMLEAGILDPAKVTRSALESAASVAGLLLTTEALIAEIPEEKPAAAPAMPGAGMDY.

ATP contacts are provided by residues 30-33 (TLGP), K51, 87-91 (DGTTT), G415, 481-483 (DAL), and D497.

Belongs to the chaperonin (HSP60) family. In terms of assembly, forms a cylinder of 14 subunits composed of two heptameric rings stacked back-to-back. Interacts with the co-chaperonin GroES.

The protein resides in the cytoplasm. The catalysed reaction is ATP + H2O + a folded polypeptide = ADP + phosphate + an unfolded polypeptide.. Together with its co-chaperonin GroES, plays an essential role in assisting protein folding. The GroEL-GroES system forms a nano-cage that allows encapsulation of the non-native substrate proteins and provides a physical environment optimized to promote and accelerate protein folding. The polypeptide is Chaperonin GroEL (Chlamydia trachomatis serovar D (strain ATCC VR-885 / DSM 19411 / UW-3/Cx)).